The sequence spans 319 residues: Forkhead box protein E3 (319 aa).

The tract at residues 1-69 (MAGRSDMDPP…GRRRRRPLQR (69 aa)) is disordered. The span at 44 to 53 (AAAGRGEAAP) shows a compositional bias: low complexity. The fork-head DNA-binding region spans 71–165 (KPPYSYIALI…DNGSFLRRRK (95 aa)).

Its subcellular location is the nucleus. Functionally, transcription factor that controls lens epithelial cell growth through regulation of proliferation, apoptosis and cell cycle. During lens development, controls the ratio of the lens fiber cells to the cells of the anterior lens epithelium by regulating the rate of proliferation and differentiation. Controls lens vesicle closure and subsequent separation of the lens vesicle from ectoderm. Controls the expression of DNAJB1 in a pathway that is crucial for the development of the anterior segment of the eye. The chain is Forkhead box protein E3 (FOXE3) from Homo sapiens (Human).